The chain runs to 409 residues: Toluene 1,2-dioxygenase system ferredoxin--NAD(+) reductase component (409 aa).

H4–D35 is an FAD binding site. R145–E173 contacts NAD(+).

The protein belongs to the bacterial ring-hydroxylating dioxygenase ferredoxin reductase family. As to quaternary structure, this dioxygenase system consists of four proteins: the two subunits of the hydroxylase component (todC1 and todC2), a ferredoxin (TodB) and a ferredoxin reductase (TodA). It depends on FAD as a cofactor.

The enzyme catalyses 2 reduced [2Fe-2S]-[ferredoxin] + NAD(+) + H(+) = 2 oxidized [2Fe-2S]-[ferredoxin] + NADH. It participates in xenobiotic degradation; toluene degradation. Its function is as follows. Part of the electron transfer component of toluene 1,2-dioxygenase, transfers electrons from ferredoxin (TodB) to NADH. The chain is Toluene 1,2-dioxygenase system ferredoxin--NAD(+) reductase component (todA) from Pseudomonas putida (Arthrobacter siderocapsulatus).